Reading from the N-terminus, the 442-residue chain is Protein IQ-DOMAIN 33 (442 aa).

The IQ domain maps to 159–188 (EEDAAVIIQSAFRSYLAIRRSKEEEETFAK). Residues 184-212 (ETFAKEESFSGEESQDNASMGTSLEAQTG) form a disordered region. The segment covering 199 to 212 (DNASMGTSLEAQTG) has biased composition (polar residues). A calmodulin-binding region spans residues 270–282 (RERALAYAFSQQL). Residues 375–442 (EKSSFKPSIS…ETSHKLNSST (68 aa)) form a disordered region. Positions 383 to 402 (ISKRKSVPSYKSQRKHHKLQ) are enriched in basic residues. The short motif at 385–392 (KRKSVPSY) is the Nuclear localization signal element.

Belongs to the IQD family. Binds to multiple calmodulin (CaM) in the presence of Ca(2+) and CaM-like proteins.

The protein localises to the nucleus. Its function is as follows. May be involved in cooperative interactions with calmodulins or calmodulin-like proteins. Recruits calmodulin proteins to microtubules, thus being a potential scaffold in cellular signaling and trafficking. May associate with nucleic acids and regulate gene expression at the transcriptional or post-transcriptional level. The polypeptide is Protein IQ-DOMAIN 33 (Arabidopsis thaliana (Mouse-ear cress)).